The primary structure comprises 657 residues: Translation factor GUF1, mitochondrial (657 aa).

A mitochondrion-targeting transit peptide spans 1-39 (MRGCLQSVKWLTSAVRQSQSLTSSTRFPRRLFNTSTLHY). In terms of domain architecture, tr-type G spans 59–239 (ERFRNFCIVA…TVIEQVPAPV (181 aa)). GTP is bound by residues 68–75 (AHVDHGKS), 132–136 (DTPGH), and 186–189 (NKVD).

This sequence belongs to the TRAFAC class translation factor GTPase superfamily. Classic translation factor GTPase family. LepA subfamily.

Its subcellular location is the mitochondrion inner membrane. The enzyme catalyses GTP + H2O = GDP + phosphate + H(+). Its function is as follows. Promotes mitochondrial protein synthesis. May act as a fidelity factor of the translation reaction, by catalyzing a one-codon backward translocation of tRNAs on improperly translocated ribosomes. Binds to mitochondrial ribosomes in a GTP-dependent manner. The protein is Translation factor GUF1, mitochondrial of Blastomyces gilchristii (strain SLH14081) (Blastomyces dermatitidis).